The chain runs to 335 residues: MKFCKKYEEYMQGQKEKKNLPGVGFKKLKKILKRCRRNHVPSRISFTDAINHNCSRECPVCDGTFFPELLKEMEDVVGWFNEHAQKLLELHLASGFTKCLTWLRGNSRKKDHHGLIQEGKDLVNYALINAVAIRKILKKYDKIHESRQGQAFKTQVQKMRIEILQSPWLCELMAFHINLKESKKESGATITSPPPPVHALFDGCALTFDDGKPLLSCELSDSVKVDIDLTCSICLDTVFDPISLTCGHIYCYMCACSAASVNVVDGLKTAEATEKCPLCREDGVYKGAVHLDELNILLKRSCRDYWEERRKTERAERLQQAKEYWDYQCRSFTGI.

The 154-residue stretch at 1-154 folds into the SPX domain; that stretch reads MKFCKKYEEY…ESRQGQAFKT (154 aa). Residues 231 to 280 form an RING-type zinc finger; the sequence is CSICLDTVFDPISLTCGHIYCYMCACSAASVNVVDGLKTAEATEKCPLCR.

In terms of assembly, interacts with UBC8. Interacts with PHT1-1 and PHT1-4. Forms homodimers (via RING domain). Interacts with UBC24/PHO2. Interacts with NPF2.13/NRT1.7. Interacts with NAC92/ORE1. In terms of tissue distribution, high expression in roots and stems, medium in seedlings, flowers, rosette and cauline leaves, and very low in siliques. Detected in cotyledons, hypocotyls, pedicel, receptacle, pistil, sepal, filament of stamen and at the two ends of developing siliques.

The protein resides in the nucleus speckle. Its subcellular location is the nucleus. It localises to the cell membrane. The catalysed reaction is S-ubiquitinyl-[E2 ubiquitin-conjugating enzyme]-L-cysteine + [acceptor protein]-L-lysine = [E2 ubiquitin-conjugating enzyme]-L-cysteine + N(6)-ubiquitinyl-[acceptor protein]-L-lysine.. Its pathway is protein modification; protein ubiquitination. Its function is as follows. E3 ubiquitin-protein ligase that mediates E2-dependent protein ubiquitination. Plays a role in salicylic acid-mediated negative feedback regulation of salicylic acid (SA) accumulation. May be involved in the overall regulation of SA, benzoic acid and phenylpropanoid biosynthesis. Involved in defense response. May act as negative regulator of resistance to the necrotrophic fungal pathogen Plectosphaerella cucumerina by modulating the accumulation of the phytoalexin camalexin and the salicylic acid- and jasmonate- dependent defense pathways. Controls the adaptability to nitrogen limitation by channeling the phenylpropanoid metabolic flux to the induced anthocyanin synthesis. Involved in the regulation of inorganic phosphate (Pi) homeostasis in a nitrate-dependent fashion. Directs the ubiquitination and subsequent degradation of the plasma membrane-localized inorganic phosphate transporters PHT1-1 and PHT1-4, to maintain phosphate homeostasis. The ubiquitination of PHTs triggers their clathrin-dependent endocytosis and trafficking to the vacuole through the endosomal pathway for degradation. Functions cooperatively with UBC24/PHO2 to regulate the abundance of PHT1-1, PHT1-2 and PHT1-3 in different subcellular compartments. Regulates Pi homeostasis by mediating, cooperatively with UBC24/PHO2, polyubiquitination of PHT1-4 and its targeting for degradation. Directs the polyubiquitination and subsequent degradation of the plasma membrane-localized nitrate transporter NPF2.13/NRT1.7, to help plants to adapt to nitrogen deficiency by regulating the source-to-sink remobilization of nitrate. Regulates leaf senescence during nitrogen deficiency by mediating, cooperatively with UBC24/PHO2, polyubiquitination of NAC92/ORE1 and its targeting for degradation. The chain is E3 ubiquitin-protein ligase NLA from Arabidopsis thaliana (Mouse-ear cress).